Here is a 145-residue protein sequence, read N- to C-terminus: Ribonuclease H (145 aa).

Residues 1 to 142 (MKEVVIYTDG…CDEIARSMIK (142 aa)) enclose the RNase H type-1 domain. 4 residues coordinate Mg(2+): D9, E47, D69, and D134.

Belongs to the RNase H family. As to quaternary structure, monomer. Mg(2+) is required as a cofactor.

It is found in the cytoplasm. The catalysed reaction is Endonucleolytic cleavage to 5'-phosphomonoester.. Its function is as follows. Endonuclease that specifically degrades the RNA of RNA-DNA hybrids. The chain is Ribonuclease H from Caldicellulosiruptor saccharolyticus (strain ATCC 43494 / DSM 8903 / Tp8T 6331).